The sequence spans 352 residues: Protein NDRG4 (352 aa).

Ser298, Ser317, and Ser323 each carry phosphoserine. Over residues 314 to 323 (RTASLTSASS) the composition is skewed to low complexity. Residues 314–352 (RTASLTSASSVDGSRPQACTHSESSEGLGQVNHTMEVSC) are disordered. Positions 330–352 (QACTHSESSEGLGQVNHTMEVSC) are enriched in polar residues.

The protein belongs to the NDRG family. Phosphorylated in an aortic smooth muscle cell line, following PDGF treatment. In terms of tissue distribution, expressed predominantly in brain and heart (at protein level). In the brain, detected in astrocytes. Isoform 1 and isoform 2 are only expressed in brain. Isoform 3 is expressed in both heart and brain. Up-regulated in glioblastoma multiforme cells.

The protein resides in the cytoplasm. It localises to the cytosol. Contributes to the maintenance of intracerebral BDNF levels within the normal range, which is necessary for the preservation of spatial learning and the resistance to neuronal cell death caused by ischemic stress. May enhance growth factor-induced ERK1 and ERK2 phosphorylation, including that induced by PDGF and FGF. May attenuate NGF-promoted ELK1 phosphorylation in a microtubule-dependent manner. The sequence is that of Protein NDRG4 (NDRG4) from Homo sapiens (Human).